The primary structure comprises 625 residues: Mesothelin (625 aa).

An N-terminal signal peptide occupies residues 1 to 35 (MALPTAQPLLGSCGSPICSRSFLLLLLSLGWLPLL). Ser202 carries the phosphoserine modification. Cys304 and Cys328 are disulfide-bonded. N-linked (GlcNAc...) asparagine glycans are attached at residues Asn390, Asn488, and Asn517. Ser600 is lipidated: GPI-anchor amidated serine. The propeptide at 601 to 625 (SGAPLLGPGFVFAWIPALLSALRLS) is removed in mature form.

It belongs to the mesothelin family. As to quaternary structure, interacts with MUC16. In terms of processing, proteolytically cleaved by a furin-like convertase to generate megakaryocyte-potentiating factor (MPF), and the cleaved form of mesothelin. In terms of tissue distribution, specifically expressed in lung. Overexpressed in hereditary renal carcinoma developed by Eker rats.

The protein localises to the cell membrane. It is found in the golgi apparatus. Its subcellular location is the secreted. In terms of biological role, membrane-anchored forms may play a role in cellular adhesion. Its function is as follows. Megakaryocyte-potentiating factor (MPF) may potentiate megakaryocyte colony formation. The chain is Mesothelin (Msln) from Rattus norvegicus (Rat).